The primary structure comprises 262 residues: Large ribosomal subunit protein eL8B (262 aa).

The interval 1-36 (MAPKGKKVAPAPLATKSAKSSESKNPLFESTPKNFG) is disordered.

It belongs to the eukaryotic ribosomal protein eL8 family. As to quaternary structure, component of the large ribosomal subunit. Mature ribosomes consist of a small (40S) and a large (60S) subunit. The 40S subunit contains about 32 different proteins and 1 molecule of RNA (18S). The 60S subunit contains 45 different proteins and 3 molecules of RNA (25S, 5.8S and 5S).

The protein resides in the cytoplasm. In terms of biological role, component of the ribosome, a large ribonucleoprotein complex responsible for the synthesis of proteins in the cell. The small ribosomal subunit (SSU) binds messenger RNAs (mRNAs) and translates the encoded message by selecting cognate aminoacyl-transfer RNA (tRNA) molecules. The large subunit (LSU) contains the ribosomal catalytic site termed the peptidyl transferase center (PTC), which catalyzes the formation of peptide bonds, thereby polymerizing the amino acids delivered by tRNAs into a polypeptide chain. The nascent polypeptides leave the ribosome through a tunnel in the LSU and interact with protein factors that function in enzymatic processing, targeting, and the membrane insertion of nascent chains at the exit of the ribosomal tunnel. This chain is Large ribosomal subunit protein eL8B, found in Candida albicans (strain SC5314 / ATCC MYA-2876) (Yeast).